The following is a 310-amino-acid chain: Malate dehydrogenase (310 aa).

NAD(+)-binding positions include glycine 7 to glycine 12 and aspartate 32. Substrate contacts are provided by arginine 81 and arginine 87. NAD(+)-binding positions include asparagine 94 and valine 117–asparagine 119. Residues asparagine 119 and arginine 150 each coordinate substrate. Histidine 174 (proton acceptor) is an active-site residue.

Belongs to the LDH/MDH superfamily. MDH type 3 family.

It carries out the reaction (S)-malate + NAD(+) = oxaloacetate + NADH + H(+). Its function is as follows. Catalyzes the reversible oxidation of malate to oxaloacetate. The protein is Malate dehydrogenase of Chlorobium chlorochromatii (strain CaD3).